We begin with the raw amino-acid sequence, 292 residues long: Shikimate dehydrogenase (NADP(+)) (292 aa).

Shikimate is bound by residues 22-24 (SLS) and Ser69. Lys73 functions as the Proton acceptor in the catalytic mechanism. Residues Asn94 and Asp111 each coordinate shikimate. NADP(+)-binding positions include 135–139 (GVGGA) and Ile236. Tyr238 provides a ligand contact to shikimate. Residue Gly260 coordinates NADP(+).

The protein belongs to the shikimate dehydrogenase family. As to quaternary structure, homodimer.

The enzyme catalyses shikimate + NADP(+) = 3-dehydroshikimate + NADPH + H(+). It functions in the pathway metabolic intermediate biosynthesis; chorismate biosynthesis; chorismate from D-erythrose 4-phosphate and phosphoenolpyruvate: step 4/7. Its function is as follows. Involved in the biosynthesis of the chorismate, which leads to the biosynthesis of aromatic amino acids. Catalyzes the reversible NADPH linked reduction of 3-dehydroshikimate (DHSA) to yield shikimate (SA). In Streptococcus pyogenes serotype M28 (strain MGAS6180), this protein is Shikimate dehydrogenase (NADP(+)).